Reading from the N-terminus, the 122-residue chain is Large ribosomal subunit protein bL12 (122 aa).

This sequence belongs to the bacterial ribosomal protein bL12 family. As to quaternary structure, homodimer. Part of the ribosomal stalk of the 50S ribosomal subunit. Forms a multimeric L10(L12)X complex, where L10 forms an elongated spine to which 2 to 4 L12 dimers bind in a sequential fashion. Binds GTP-bound translation factors.

In terms of biological role, forms part of the ribosomal stalk which helps the ribosome interact with GTP-bound translation factors. Is thus essential for accurate translation. The sequence is that of Large ribosomal subunit protein bL12 from Mycoplasma pneumoniae (strain ATCC 29342 / M129 / Subtype 1) (Mycoplasmoides pneumoniae).